The sequence spans 120 residues: Large-conductance mechanosensitive channel (120 aa).

Helical transmembrane passes span 7–27 and 64–84; these read EFAL…GAAF and GLFI…FIFV.

It belongs to the MscL family. Homopentamer.

The protein resides in the cell membrane. Its function is as follows. Channel that opens in response to stretch forces in the membrane lipid bilayer. May participate in the regulation of osmotic pressure changes within the cell. In Staphylococcus aureus (strain Mu3 / ATCC 700698), this protein is Large-conductance mechanosensitive channel.